The chain runs to 1433 residues: Probable ATP-dependent RNA helicase spindle-E (1433 aa).

The interval 76–98 is disordered; the sequence is NRTLDELDSDDEEENMQEQPSVR. Acidic residues predominate over residues 81–91; sequence ELDSDDEEENM. The Helicase ATP-binding domain maps to 127 to 294; sequence MKAIRENPVV…FATSSAFPPV (168 aa). 140-147 is an ATP binding site; it reads GETGCGKT. The short motif at 240–243 is the DEAH box element; it reads DEVH. Positions 354–526 constitute a Helicase C-terminal domain; it reads QSLQSYEEAK…NSVLKAKELE (173 aa). The Tudor domain maps to 937–1000; that stretch reads ASAVTKGLQL…RLMPHELKRD (64 aa).

It belongs to the DEAD box helicase family. DEAH subfamily.

It localises to the cytoplasm. The catalysed reaction is ATP + H2O = ADP + phosphate + H(+). In terms of biological role, probable ATP-binding RNA helicase which plays a central role during spermatogenesis and oogenesis by repressing transposable elements and preventing their mobilization, which is essential for the germline integrity. Acts via the piRNA metabolic process, which mediates the repression of transposable elements during meiosis by forming complexes composed of piRNAs and Piwi and govern the methylation and subsequent repression of transposons. Involved in the repression of LTR retrotransposon copia. Also involved in telomere regulation by repressing specialized telomeric retroelements HeT-A, TAHRE, and TART; Drosophila telomeres being maintained by transposition of specialized telomeric retroelements. Involved in telomeric trans-silencing, a repression mechanism by which a transposon or a transgene inserted in subtelomeric heterochromatin has the capacity to repress in trans in the female germline, a homologous transposon, or transgene located in euchromatin. Involved in the repression of testis-expressed Stellate genes by the homologous Su(Ste) repeats. Required for anteroposterior and dorsoventral axis formation during oogenesis. The sequence is that of Probable ATP-dependent RNA helicase spindle-E (spn-E) from Drosophila virilis (Fruit fly).